Reading from the N-terminus, the 179-residue chain is Insulin-like growth factor 2 (179 aa).

An N-terminal signal peptide occupies residues 1-24; that stretch reads MGITAGKSVLVLLAFLAFASCCYA. A b region spans residues 25–52; that stretch reads AYRPSETLCGGELVDTLQFVCGDRGFYF. Intrachain disulfides connect C33–C71, C45–C84, and C70–C75. Residues 53 to 64 are c; that stretch reads SRPSSRINRRSR. The interval 65-85 is a; it reads GIVEECCFRSCDLALLETYCA. Residues 86–91 are d; that stretch reads TPAKSE. Residues 92-179 constitute a propeptide, e peptide; that stretch reads RDVSASTTVL…GGASSKASSD (88 aa). T106 carries O-linked (GalNAc...) threonine glycosylation. O-linked (GalNAc...) serine glycosylation occurs at S154. The segment at 160-179 is disordered; that stretch reads ALPTQDPATHGGASSKASSD. Residue T163 is glycosylated (O-linked (GalNAc...) threonine).

It belongs to the insulin family. In terms of assembly, interacts with MYORG; this interaction is required for IGF2 secretion. Interacts with integrins ITGAV:ITGB3 and ITGA6:ITGB4; integrin-binding is required for IGF2 signaling. Interacts with IGFBP2. In terms of processing, proteolytically processed by PCSK4, proIGF2 is cleaved at Arg-128 and Arg-92 to generate big-IGF2 and mature IGF2.

It localises to the secreted. Its function is as follows. The insulin-like growth factors possess growth-promoting activity. Major fetal growth hormone in mammals. Plays a key role in regulating fetoplacental development. IGF2 is influenced by placental lactogen. Also involved in tissue differentiation. In adults, involved in glucose metabolism in adipose tissue, skeletal muscle and liver. Acts as a ligand for integrin which is required for IGF2 signaling. Positively regulates myogenic transcription factor MYOD1 function by facilitating the recruitment of transcriptional coactivators, thereby controlling muscle terminal differentiation. Inhibits myoblast differentiation and modulates metabolism via increasing the mitochondrial respiration rate. Preptin undergoes glucose-mediated co-secretion with insulin, and acts as a physiological amplifier of glucose-mediated insulin secretion. Exhibits osteogenic properties by increasing osteoblast mitogenic activity through phosphoactivation of MAPK1 and MAPK3. This chain is Insulin-like growth factor 2, found in Bos taurus (Bovine).